The chain runs to 552 residues: Alcohol dehydrogenase [acceptor] (552 aa).

Aspartate 3 to glutamate 32 contributes to the FAD binding site. Histidine 469 functions as the Proton acceptor in the catalytic mechanism.

This sequence belongs to the GMC oxidoreductase family. Requires FAD as cofactor.

The protein localises to the cell inner membrane. It carries out the reaction a primary alcohol + A = an aldehyde + AH2. Its function is as follows. Converts aliphatic medium-chain-length alcohols into aldehydes. May be linked to the electron transfer chain. The sequence is that of Alcohol dehydrogenase [acceptor] (alkJ) from Pseudomonas putida (Arthrobacter siderocapsulatus).